Here is a 98-residue protein sequence, read N- to C-terminus: Carboxysome shell protein CsoS1C (98 aa).

The 86-residue stretch at Ala8–Pro93 folds into the BMC domain.

Belongs to the bacterial microcompartments protein family. CsoS1 subfamily. Homohexamer with a small central pore. Interacts with the N-terminus (residues 1-136) of RuBisCO (CbbL).

It localises to the carboxysome. In terms of biological role, one of shell proteins of the carboxysome, a polyhedral inclusion where RuBisCO (ribulose bisphosphate carboxylase, ccbL-ccbS) is sequestered. Assembles into hexamers which make sheets that form the facets of the polyhedral carboxysome. The shell probably limits the diffusion of CO(2) into and out of the carboxysome. There are estimated to be 2970 CsoS1A/CsoS1C proteins per carboxysome (the proteins differ by only 1 residue). Unlike beta-carboxysomes, alpha-carboxysomes (Cb) can form without cargo protein. CsoS2 is essential for Cb formation and is also capable of targeting foreign proteins to the Cb. The Cb shell assembles with the aid of CsoS2; CsoS1A, CsoS1B and CsoS1C form the majority of the shell while CsoS4A and CsoS4B form vertices. CsoS1D forms pseudohexamers that probably control metabolite flux into and out of the shell. This is Carboxysome shell protein CsoS1C from Halothiobacillus neapolitanus (strain ATCC 23641 / c2) (Thiobacillus neapolitanus).